The following is a 478-amino-acid chain: Glutamate--tRNA ligase (478 aa).

Residues 15 to 25 (PSPTGFLHIGG) carry the 'HIGH' region motif. The 'KMSKS' region signature appears at 244–248 (KLSKR). An ATP-binding site is contributed by Lys247.

The protein belongs to the class-I aminoacyl-tRNA synthetase family. Glutamate--tRNA ligase type 1 subfamily. Monomer.

The protein resides in the cytoplasm. It carries out the reaction tRNA(Glu) + L-glutamate + ATP = L-glutamyl-tRNA(Glu) + AMP + diphosphate. In terms of biological role, catalyzes the attachment of glutamate to tRNA(Glu) in a two-step reaction: glutamate is first activated by ATP to form Glu-AMP and then transferred to the acceptor end of tRNA(Glu). This is Glutamate--tRNA ligase from Bradyrhizobium sp. (strain ORS 278).